Reading from the N-terminus, the 698-residue chain is Cytoplasmic polyadenylation element-binding protein 3 (698 aa).

Basic and acidic residues predominate over residues 1–11; it reads MQDDLLMDKSK. Disordered stretches follow at residues 1-114 and 158-208; these read MQDD…WSTG and AQTQ…SAAA. A compositionally biased stretch (low complexity) spans 13-28; it reads QPQPQQQQRQQQQPQP. Over residues 29–44 the composition is skewed to polar residues; it reads ESSVSEAPSTPLSSET. Over residues 87-96 the composition is skewed to pro residues; it reads PQQPPPPQEP. A compositionally biased stretch (polar residues) spans 103-114; the sequence is LSPSFGSTWSTG. A compositionally biased stretch (pro residues) spans 165 to 185; it reads QPPPPAPAPQPAQPAQPPQAQ. The span at 186–208 shows a compositional bias: low complexity; sequence PPQQRRSPASPSQAPYAQRSAAA. Phosphoserine is present on residues Ser-192, Ser-195, and Ser-290. Arg-308 is modified (asymmetric dimethylarginine). 2 consecutive RRM domains span residues 441-532 and 549-631; these read RKVF…PWNL and KTIF…PYVL.

This sequence belongs to the RRM CPEB family. In terms of assembly, following synaptic activity, forms amyloid-like oligomers. Aggregation requires an intact actin cytoskeleton. Interacts with STAT5B; this inhibits STAT5B-mediated transcriptional activation. Interacts with E3 ubiquitin-protein ligase NEURL1; this leads to monoubiquitination and activation of CPEB3. Interacts with CAPN2; this leads to cleavage of CPEB3. Interacts (via C-terminal RNA-binding region) with TOB1; TOB1 also binds CNOT7/CAF1 and recruits it to CPEB3 to form a ternary complex. Interacts with SUMO-conjugating enzyme UBC9. Interacts with IPO5; the interaction is enhanced in a RAN-regulated manner following neuronal stimulation and mediates CPEB3 nuclear import. Interacts with exportin XPO1/CRM1. Activated by NEURL1-mediated monoubiquitination, resulting in the growth of new dendritic spines and increased levels of GRIA1 and GRIA2. NEURL1-mediated monoubiquitination facilitates synaptic plasticity and hippocampal-dependent memory storage. In terms of processing, under basal unstimulated conditions when CPEB3 is mainly unaggregated, sumoylated and acts as a translational repressor. Following neuronal stimulation, becomes desumoylated and aggregated which is required for the translation of mRNA targets and for dendritic filopodia formation. Post-translationally, following neuronal stimulation, cleaved by CAPN2 which abolishes its translational repressor activity, leading to translation of CPEB3 target mRNAs. Phosphorylation is enhanced by neuronal stimulation.

Its subcellular location is the cytoplasm. It localises to the nucleus. The protein resides in the synapse. The protein localises to the cell projection. It is found in the dendrite. Its subcellular location is the postsynaptic density. Functionally, sequence-specific RNA-binding protein which acts as a translational repressor in the basal unstimulated state but, following neuronal stimulation, acts as a translational activator. In contrast to CPEB1, does not bind to the cytoplasmic polyadenylation element (CPE), a uridine-rich sequence element within the mRNA 3'-UTR, but binds to a U-rich loop within a stem-loop structure. Required for the consolidation and maintenance of hippocampal-based long term memory. In the basal state, binds to the mRNA 3'-UTR of the glutamate receptors GRIA2/GLUR2 mRNA and negatively regulates their translation. Also represses the translation of DLG4, GRIN1, GRIN2A and GRIN2B. When activated, acts as a translational activator of GRIA1 and GRIA2. In the basal state, suppresses SUMO2 translation but activates it following neuronal stimulation. Binds to the 3'-UTR of TRPV1 mRNA and represses TRPV1 translation which is required to maintain normal thermoception. Binds actin mRNA, leading to actin translational repression in the basal state and to translational activation following neuronal stimulation. Negatively regulates target mRNA levels by binding to TOB1 which recruits CNOT7/CAF1 to a ternary complex and this leads to target mRNA deadenylation and decay. In addition to its role in translation, binds to and inhibits the transcriptional activation activity of STAT5B without affecting its dimerization or DNA-binding activity. This, in turn, represses transcription of the STAT5B target gene EGFR which has been shown to play a role in enhancing learning and memory performance. In contrast to CPEB1, CPEB2 and CPEB4, not required for cell cycle progression. This chain is Cytoplasmic polyadenylation element-binding protein 3 (CPEB3), found in Homo sapiens (Human).